The following is a 329-amino-acid chain: uncharacterized protein (329 aa).

Residues 37 to 180 form the SIS domain; that stretch reads LAEKILGHSG…AMLLFHSRGV (144 aa). 52 to 57 is an ATP binding site; the sequence is GVGKSG. CBS domains are found at residues 206 to 265 and 274 to 329; these read MFPK…GGEV and MTAN…AGLL.

This sequence belongs to the SIS family. GutQ/KpsF subfamily.

This is an uncharacterized protein from Chlamydia pneumoniae (Chlamydophila pneumoniae).